A 429-amino-acid chain; its full sequence is Glucose-1-phosphate adenylyltransferase (429 aa).

Alpha-D-glucose 1-phosphate contacts are provided by residues Y116, G181, E196–K197, and S214.

It belongs to the bacterial/plant glucose-1-phosphate adenylyltransferase family. In terms of assembly, homotetramer.

It carries out the reaction alpha-D-glucose 1-phosphate + ATP + H(+) = ADP-alpha-D-glucose + diphosphate. Its pathway is glycan biosynthesis; glycogen biosynthesis. Its function is as follows. Involved in the biosynthesis of ADP-glucose, a building block required for the elongation reactions to produce glycogen. Catalyzes the reaction between ATP and alpha-D-glucose 1-phosphate (G1P) to produce pyrophosphate and ADP-Glc. The chain is Glucose-1-phosphate adenylyltransferase from Paramagnetospirillum magneticum (strain ATCC 700264 / AMB-1) (Magnetospirillum magneticum).